The chain runs to 536 residues: CTP synthase (536 aa).

An amidoligase domain region spans residues 1 to 266; the sequence is MKTKFIFVTG…DEQVVEKLNI (266 aa). Ser-14 serves as a coordination point for CTP. Position 14 (Ser-14) interacts with UTP. ATP contacts are provided by residues 15-20 and Asp-72; that span reads SIGKGL. Mg(2+) is bound by residues Asp-72 and Glu-140. Residues 147 to 149, 187 to 192, and Lys-223 each bind CTP; these read DIE and KTKPTQ. Residues 187–192 and Lys-223 each bind UTP; that span reads KTKPTQ. One can recognise a Glutamine amidotransferase type-1 domain in the interval 292 to 534; it reads RIAIVGKYVN…IAAALDRKDK (243 aa). Position 354 (Gly-354) interacts with L-glutamine. Cys-381 serves as the catalytic Nucleophile; for glutamine hydrolysis. L-glutamine is bound by residues 382–385, Glu-405, and Arg-462; that span reads LGMQ. Active-site residues include His-507 and Glu-509.

The protein belongs to the CTP synthase family. Homotetramer.

The enzyme catalyses UTP + L-glutamine + ATP + H2O = CTP + L-glutamate + ADP + phosphate + 2 H(+). It carries out the reaction L-glutamine + H2O = L-glutamate + NH4(+). It catalyses the reaction UTP + NH4(+) + ATP = CTP + ADP + phosphate + 2 H(+). Its pathway is pyrimidine metabolism; CTP biosynthesis via de novo pathway; CTP from UDP: step 2/2. Its activity is regulated as follows. Allosterically activated by GTP, when glutamine is the substrate; GTP has no effect on the reaction when ammonia is the substrate. The allosteric effector GTP functions by stabilizing the protein conformation that binds the tetrahedral intermediate(s) formed during glutamine hydrolysis. Inhibited by the product CTP, via allosteric rather than competitive inhibition. In terms of biological role, catalyzes the ATP-dependent amination of UTP to CTP with either L-glutamine or ammonia as the source of nitrogen. Regulates intracellular CTP levels through interactions with the four ribonucleotide triphosphates. The protein is CTP synthase of Geobacter sulfurreducens (strain ATCC 51573 / DSM 12127 / PCA).